Reading from the N-terminus, the 207-residue chain is Probable GTP-binding protein EngB (207 aa).

Residues 24–199 (GGYEVAFAGR…RAIVGAWLGL (176 aa)) form the EngB-type G domain. Residues 32 to 39 (GRSNAGKS), 59 to 63 (GRTQQ), 77 to 80 (DLPG), 144 to 147 (TKAD), and 178 to 180 (YSG) each bind GTP. Mg(2+)-binding residues include Ser39 and Thr61.

It belongs to the TRAFAC class TrmE-Era-EngA-EngB-Septin-like GTPase superfamily. EngB GTPase family. Mg(2+) is required as a cofactor.

Necessary for normal cell division and for the maintenance of normal septation. This is Probable GTP-binding protein EngB from Xanthomonas euvesicatoria pv. vesicatoria (strain 85-10) (Xanthomonas campestris pv. vesicatoria).